Reading from the N-terminus, the 503-residue chain is Maturase K (503 aa).

This sequence belongs to the intron maturase 2 family. MatK subfamily.

The protein localises to the plastid. It localises to the chloroplast. In terms of biological role, usually encoded in the trnK tRNA gene intron. Probably assists in splicing its own and other chloroplast group II introns. This Lathyrus vestitus (Pacific pea) protein is Maturase K.